The primary structure comprises 163 residues: MDSSEDNPTWTLESLKTSIDDASQAMQVATQLSEMLATNLSNLTLNPSIKLPYLPEYPSQLTGQLPSEKTPHRRRGVRTVLSERRYRMQKLIESLRLRYAKGIPRSDSQRQLQQQEDTEIRSRVRRFQCTCSYCQFKRNPSDDNYENYYNTTYSNYAMESNES.

Preferentially expressed in oocyte.

It localises to the nucleus. The protein resides in the cytoplasm. Primordial germ cell (PGCs)-specific protein involved in epigenetic chromatin reprogramming in the zygote following fertilization. In zygotes, DNA demethylation occurs selectively in the paternal pronucleus before the first cell division, while the adjacent maternal pronucleus and certain paternally-imprinted loci are protected from this process. Participates in protection of DNA methylation in the maternal pronucleus by preventing conversion of 5mC to 5hmC: specifically recognizes and binds histone H3 dimethylated at 'Lys-9' (H3K9me2) on maternal genome, and protects maternal genome from TET3-mediated conversion to 5hmC and subsequent DNA demethylation. Does not bind paternal chromatin, which is mainly packed into protamine and does not contain much H3K9me2 mark. Also protects imprinted loci that are marked with H3K9me2 in mature sperm from DNA demethylation in early embryogenesis. May be important for the totipotent/pluripotent states continuing through preimplantation development. Also involved in chromatin condensation in oocytogenesis. This is Developmental pluripotency-associated protein 3 (DPPA3) from Bos taurus (Bovine).